A 156-amino-acid chain; its full sequence is tRNA (cytidine(34)-2'-O)-methyltransferase (156 aa).

Residues Gly100, Ile122, and Ser130 each coordinate S-adenosyl-L-methionine.

This sequence belongs to the class IV-like SAM-binding methyltransferase superfamily. RNA methyltransferase TrmH family. TrmL subfamily. As to quaternary structure, homodimer.

Its subcellular location is the cytoplasm. The enzyme catalyses cytidine(34) in tRNA + S-adenosyl-L-methionine = 2'-O-methylcytidine(34) in tRNA + S-adenosyl-L-homocysteine + H(+). It carries out the reaction 5-carboxymethylaminomethyluridine(34) in tRNA(Leu) + S-adenosyl-L-methionine = 5-carboxymethylaminomethyl-2'-O-methyluridine(34) in tRNA(Leu) + S-adenosyl-L-homocysteine + H(+). Methylates the ribose at the nucleotide 34 wobble position in the two leucyl isoacceptors tRNA(Leu)(CmAA) and tRNA(Leu)(cmnm5UmAA). Catalyzes the methyl transfer from S-adenosyl-L-methionine to the 2'-OH of the wobble nucleotide. The protein is tRNA (cytidine(34)-2'-O)-methyltransferase of Aeromonas hydrophila subsp. hydrophila (strain ATCC 7966 / DSM 30187 / BCRC 13018 / CCUG 14551 / JCM 1027 / KCTC 2358 / NCIMB 9240 / NCTC 8049).